Consider the following 308-residue polypeptide: Glutaminase (308 aa).

The substrate site is built by serine 66, asparagine 117, glutamate 161, asparagine 168, tyrosine 192, tyrosine 244, and valine 262.

This sequence belongs to the glutaminase family. Homotetramer.

It catalyses the reaction L-glutamine + H2O = L-glutamate + NH4(+). The protein is Glutaminase of Enterobacter sp. (strain 638).